The chain runs to 225 residues: Ribose-5-phosphate isomerase A (225 aa).

Residues Thr-26–Thr-29, Asp-82–Asp-85, and Lys-95–Gly-98 each bind substrate. Glu-104 (proton acceptor) is an active-site residue. Lys-122 is a binding site for substrate.

The protein belongs to the ribose 5-phosphate isomerase family. As to quaternary structure, homodimer.

It catalyses the reaction aldehydo-D-ribose 5-phosphate = D-ribulose 5-phosphate. It participates in carbohydrate degradation; pentose phosphate pathway; D-ribose 5-phosphate from D-ribulose 5-phosphate (non-oxidative stage): step 1/1. Its function is as follows. Catalyzes the reversible conversion of ribose-5-phosphate to ribulose 5-phosphate. The chain is Ribose-5-phosphate isomerase A from Streptococcus sanguinis (strain SK36).